The chain runs to 128 residues: UPF0102 protein Acry_2261 (128 aa).

This sequence belongs to the UPF0102 family.

This Acidiphilium cryptum (strain JF-5) protein is UPF0102 protein Acry_2261.